We begin with the raw amino-acid sequence, 346 residues long: ATP-dependent (S)-NAD(P)H-hydrate dehydratase 2 (346 aa).

The disordered stretch occupies residues 1 to 20; the sequence is MMVHSPLATGPHPTTHLEPT. The YjeF C-terminal domain maps to 28-339; it reads LLRKAFQMIP…GYIGEAFEQV (312 aa). (6S)-NADPHX contacts are provided by residues glycine 135 and 188–194; that span reads NHVEFQR. Residues 228–232 and 248–257 each bind ATP; these read KGSID and GSPKRCGGQG. Aspartate 258 contacts (6S)-NADPHX.

This sequence belongs to the NnrD/CARKD family. Requires Mg(2+) as cofactor.

It localises to the cytoplasm. The enzyme catalyses (6S)-NADHX + ATP = ADP + phosphate + NADH + H(+). The catalysed reaction is (6S)-NADPHX + ATP = ADP + phosphate + NADPH + H(+). Its function is as follows. Catalyzes the dehydration of the S-form of NAD(P)HX at the expense of ATP, which is converted to ADP. Together with NAD(P)HX epimerase, which catalyzes the epimerization of the S- and R-forms, the enzyme allows the repair of both epimers of NAD(P)HX, a damaged form of NAD(P)H that is a result of enzymatic or heat-dependent hydration. The protein is ATP-dependent (S)-NAD(P)H-hydrate dehydratase 2 of Puccinia graminis f. sp. tritici (strain CRL 75-36-700-3 / race SCCL) (Black stem rust fungus).